The following is a 423-amino-acid chain: Heat shock transcription factor, X-linked (423 aa).

Positions 1–25 are enriched in basic and acidic residues; sequence MEDKRSLSMARCEERNSRGQDHGLE. Disordered stretches follow at residues 1–56, 215–303, and 397–423; these read MEDK…STGS, KSAP…EGSQ, and PHSH…DQST. The DNA-binding element occupies 98-282; that stretch reads PFPQKLWRLV…PATPVMVPDS (185 aa). A Glycyl lysine isopeptide (Lys-Gly) (interchain with G-Cter in SUMO1) cross-link involves residue Lys215. The segment covering 243–254 has biased composition (polar residues); that stretch reads HTSPNENDQVTP.

This sequence belongs to the HSF family. As to expression, testis-specific.

It localises to the nucleus. Its subcellular location is the cytoplasm. In Homo sapiens (Human), this protein is Heat shock transcription factor, X-linked (HSFX1).